A 269-amino-acid polypeptide reads, in one-letter code: Propanediol uptake facilitator PduF (269 aa).

Transmembrane regions (helical) follow at residues 10–30 (IAEFLGTGLFLFFGIGCLSAL) and 42–62 (ICIIWGLGISLAVYLTAGISG). The NPA 1 signature appears at 66–68 (NPA). 3 consecutive transmembrane segments (helical) span residues 69 to 89 (ITIALWLFACFPGRKVLPYTV), 143 to 163 (VWQAALVEVVITSILMGMIMA), and 179 to 199 (LLIGILVAVIGASTGPLTGFA). An NPA 2 motif is present at residues 201–203 (NPA). A helical transmembrane segment spans residues 228–248 (IPYFIVPIVAPIIGACAGAAI).

It belongs to the MIP/aquaporin (TC 1.A.8) family.

Its subcellular location is the cell inner membrane. In terms of biological role, probably facilitates diffusion of 1,2-propanediol (1,2-PD) into the cell. The chain is Propanediol uptake facilitator PduF from Citrobacter freundii.